The primary structure comprises 250 residues: Membrane-spanning 4-domains subfamily A member 8 (250 aa).

Over 1 to 74 (MNSMTSAVPV…ALKEGKTLGA (74 aa)) the chain is Cytoplasmic. Residues 75-95 (IQIIIGLAHIGLGSIMATVLV) traverse the membrane as a helical segment. Residues 96–98 (GEY) are Extracellular-facing. Residues 99-119 (LSISFYGGFPFWGGLWFIISG) form a helical membrane-spanning segment. The Cytoplasmic segment spans residues 120-136 (SLSVAAENQPYSYCLLS). The chain crosses the membrane as a helical span at residues 137–157 (GSLGLNIVSAICSAVGVILFI). Residues 158–180 (TDLSIPHPYAYPDYYPYAWGVNP) are Extracellular-facing. The helical transmembrane segment at 181-201 (GMAISGVLLVFCLLEFGIACA) threads the bilayer. The Cytoplasmic portion of the chain corresponds to 202 to 250 (SSHFGCQLVCCQSSNVSVIYPNIYAANPVITPEPVTSPPSYSSEIQANK).

This sequence belongs to the MS4A family. In terms of tissue distribution, expressed by hematopoietic tissues and cells lines.

The protein resides in the membrane. Its function is as follows. May be involved in signal transduction as a component of a multimeric receptor complex. In Homo sapiens (Human), this protein is Membrane-spanning 4-domains subfamily A member 8 (MS4A8).